Here is a 101-residue protein sequence, read N- to C-terminus: Large ribosomal subunit protein uL23 (101 aa).

The protein belongs to the universal ribosomal protein uL23 family. As to quaternary structure, part of the 50S ribosomal subunit. Contacts protein L29, and trigger factor when it is bound to the ribosome.

One of the early assembly proteins it binds 23S rRNA. One of the proteins that surrounds the polypeptide exit tunnel on the outside of the ribosome. Forms the main docking site for trigger factor binding to the ribosome. The chain is Large ribosomal subunit protein uL23 from Pseudarthrobacter chlorophenolicus (strain ATCC 700700 / DSM 12829 / CIP 107037 / JCM 12360 / KCTC 9906 / NCIMB 13794 / A6) (Arthrobacter chlorophenolicus).